Here is a 126-residue protein sequence, read N- to C-terminus: Putative esterase ComA2 (126 aa).

It belongs to the thioesterase PaaI family.

Its function is as follows. Is not required for competence. The polypeptide is Putative esterase ComA2 (yuxO) (Bacillus subtilis (strain 168)).